The primary structure comprises 383 residues: NIPA-like protein 2 (383 aa).

N23 and N33 each carry an N-linked (GlcNAc...) asparagine glycan. 9 helical membrane-spanning segments follow: residues 46–66 (IHLF…ISLN), 88–108 (VLWL…FAAY), 115–135 (LIAP…VLFL), 144–164 (LLGM…APNI), 177–197 (FVGW…CILL), 208–228 (IVVL…SVKA), 243–263 (LTYA…VFQV), 278–298 (VVPV…IIFY), and 306–326 (FLTV…VFLV). The segment at 352 to 383 (DKVQPDSNGLSYGTLPDGGDSTRGQCGEKKES) is disordered.

It belongs to the NIPA family.

It localises to the membrane. This chain is NIPA-like protein 2 (Nipal2), found in Mus musculus (Mouse).